The following is a 541-amino-acid chain: Sialate O-acetylesterase (541 aa).

The signal sequence occupies residues 1–23; that stretch reads MVSPGPVFGIVLLIIARVSRSAG. Residues N107, N138, N188, N293, N356, N427, N448, and N462 are each glycosylated (N-linked (GlcNAc...) asparagine).

Disulfide-linked heterodimer of a small subunit and a large subunit. The two subunits are derived from a single precursor by proteolytic cleavage. Post-translationally, the lysosomal isoform is glycosylated. As to expression, highly expressed in liver, testis, and kidney, whereas skeletal muscle, adipose tissue, and heart have lower levels. In terms of tissue distribution, highest expression in brain and ovary and lower levels in liver and thymus.

It localises to the lysosome. The protein resides in the cytoplasm. It carries out the reaction N-acetyl-9-O-acetylneuraminate + H2O = N-acetylneuraminate + acetate + H(+). It catalyses the reaction an Ac-O-9-sialoglycoconjugate + H2O = a sialoglycoconjugate + acetate + H(+). With respect to regulation, inhibited by diisopropyl fluorophosphate and diethyl-P-nitrophenyl phosphate. In terms of biological role, catalyzes the removal of O-acetyl ester groups from position 9 of the free diacetylated sialate N-acetyl-9-O-acetylneuraminate (Neu5,9Ac2) in the cytosol and of the diacetylated sialate residues of sialylglycoconjugates in the lysosomes. Together with the sialate-O-acetyltransferase they regulate the balance of acetylated sialoglycoconjugates, key players in various processes such as cell-cell interactions, host-pathogen recognition, and tumor antigenicity. This chain is Sialate O-acetylesterase (Siae), found in Mus musculus (Mouse).